The chain runs to 143 residues: MFMGEFEHSVDTKGRLIIPAKFREQLGEQFVVTRGMDGCLFGYPMTEWTALQEKLKALPVNRKDARAFVRFFYSAATECELDKQGRINLPKSLRDHAALTKQCVIVGVANRFEIWSAERWNDFSTKAEEDFDDIAENLIDFGM.

2 consecutive SpoVT-AbrB domains span residues Glu5–Glu47 and Ala76–Arg119.

The protein belongs to the MraZ family. Forms oligomers.

The protein localises to the cytoplasm. It localises to the nucleoid. The sequence is that of Transcriptional regulator MraZ from Levilactobacillus brevis (strain ATCC 367 / BCRC 12310 / CIP 105137 / JCM 1170 / LMG 11437 / NCIMB 947 / NCTC 947) (Lactobacillus brevis).